The primary structure comprises 381 residues: MRNDRPVRITRGSGDLYVYATGITTLSTNFPDDLGKSPSTLPEISTASMSALSFLYSQLFVEPPVPTHDFQGQTVIITGSNRGIGFEAARHLLRLNVSRLILAARSAEKGQIAADTLEQLTGRSGVIQVEELDMANQESVQEFATRMEMCRIDAVLLNAGIYTHDFVWADNHESTLTVNVINTFLLAILLLPALRRSSKTWVIQPCISFVASDRHVMYDLPEWKTQNTFQVLNDRQQARMHERYPISKLLEILLARAMAKQLDSNPPNGTGNIIVNSFTPGYCTSGLIENVHGITGFALWLLSKATARTTEVGGRTLVAAIAQGDKSHGKYLNDGHIDESALSPFVRSQEGILAMEKLWEELMEILEQKRPGIGLLLSPVP.

NADP(+) contacts are provided by Ile-84, Lys-109, Asp-133, Asn-158, Tyr-244, and Lys-248. Tyr-244 (proton acceptor) is an active-site residue. The Proton donor role is filled by Tyr-244. The active-site Lowers pKa of active site Tyr is the Lys-248.

This sequence belongs to the short-chain dehydrogenases/reductases (SDR) family.

Functionally, highly reducing polyketide synthase; part of the gene cluster that mediates the biosynthesis of annullatin D, an alkylated aromatic polyketide with a fused dihydrobenzofuran lactone ring system that exhibits potent agonistic activities toward the cannabinoid receptors. AnuD does not seem to play a role within the pathway. The annullatin backbone 2-hydroxymethyl-3-pentylphenol is assembled from one acetyl-CoA starter unit and 5 malonyl-CoA elongation units by cooperation of the highly reducing polyketide synthase anuA, the short-chain dehydrogenase anuB and the oxidoreductase anuC, before being hydroxylated at the C-5 alkyl chain by the cytochrome P450 monooxygenase anuE to form (8S)-annullatin E. The prenyltransferase anuH subsequently installs one isoprenyl group at the benzene ring to form (8S)-annullatin J. Enzymatic or nonenzymatic dihydro-benzofuran ring formation between the prenyl and the phenolic hydroxyl groups in (8S)-annullatin J results in two diastereomers (2S,9S)-annullatin H and compound 12. The intermediate (2S,9S)-annullatin H is then converted to (2S,9S)-annullatin D by the FAD-linked oxidoreductase anuG-catalyzed five-member lactone ring formation. The isomer 12 acts as a substrate for the short-chain dehydrogenase anuF and is oxidized to (2R)-annullatin F, which is subsequently acetylated by an acetyltransferase leading to (2R)-annullatin G formation. The remaining enzymes identified within the cluster, anuD, anuI and anuJ, seem not to be involved in annullatin biosynthesis. The protein is Short-chain dehydrogenase anuD of Penicillium roqueforti (strain FM164).